A 250-amino-acid polypeptide reads, in one-letter code: NAD(P)H-quinone oxidoreductase subunit K, chloroplastic (250 aa).

The [4Fe-4S] cluster site is built by Cys67, Cys68, Cys132, and Cys163.

It belongs to the complex I 20 kDa subunit family. NDH is composed of at least 16 different subunits, 5 of which are encoded in the nucleus. [4Fe-4S] cluster serves as cofactor.

It localises to the plastid. The protein localises to the chloroplast thylakoid membrane. The enzyme catalyses a plastoquinone + NADH + (n+1) H(+)(in) = a plastoquinol + NAD(+) + n H(+)(out). It carries out the reaction a plastoquinone + NADPH + (n+1) H(+)(in) = a plastoquinol + NADP(+) + n H(+)(out). Functionally, NDH shuttles electrons from NAD(P)H:plastoquinone, via FMN and iron-sulfur (Fe-S) centers, to quinones in the photosynthetic chain and possibly in a chloroplast respiratory chain. The immediate electron acceptor for the enzyme in this species is believed to be plastoquinone. Couples the redox reaction to proton translocation, and thus conserves the redox energy in a proton gradient. In Adiantum capillus-veneris (Maidenhair fern), this protein is NAD(P)H-quinone oxidoreductase subunit K, chloroplastic.